Reading from the N-terminus, the 755-residue chain is Catalase-peroxidase (755 aa).

Positions 93-241 form a cross-link, tryptophyl-tyrosyl-methioninium (Trp-Tyr) (with M-267); sequence WHSAGTYRVF…LAAAHMGLIY (149 aa). H94 serves as the catalytic Proton acceptor. A cross-link (tryptophyl-tyrosyl-methioninium (Tyr-Met) (with W-93)) is located at residues 241-267; the sequence is YVNPEGPDGNPDPVAAARDIRVTFGRM. H282 lines the heme b pocket.

This sequence belongs to the peroxidase family. Peroxidase/catalase subfamily. As to quaternary structure, homodimer or homotetramer. The cofactor is heme b. Post-translationally, formation of the three residue Trp-Tyr-Met cross-link is important for the catalase, but not the peroxidase activity of the enzyme.

Its subcellular location is the cytoplasm. It catalyses the reaction H2O2 + AH2 = A + 2 H2O. The catalysed reaction is 2 H2O2 = O2 + 2 H2O. In terms of biological role, bifunctional enzyme with both catalase and broad-spectrum peroxidase activity. The polypeptide is Catalase-peroxidase (Podospora anserina (strain S / ATCC MYA-4624 / DSM 980 / FGSC 10383) (Pleurage anserina)).